A 501-amino-acid chain; its full sequence is Glycerol kinase (501 aa).

T17 lines the ADP pocket. ATP-binding residues include T17, T18, and S19. T17 serves as a coordination point for sn-glycerol 3-phosphate. R21 is an ADP binding site. 4 residues coordinate sn-glycerol 3-phosphate: R87, E88, Y139, and D243. Glycerol is bound by residues R87, E88, Y139, D243, and Q244. T265 and G308 together coordinate ADP. Residues T265, G308, Q312, and G409 each contribute to the ATP site. Residues G409 and N413 each contribute to the ADP site.

Belongs to the FGGY kinase family.

It catalyses the reaction glycerol + ATP = sn-glycerol 3-phosphate + ADP + H(+). It participates in polyol metabolism; glycerol degradation via glycerol kinase pathway; sn-glycerol 3-phosphate from glycerol: step 1/1. With respect to regulation, inhibited by fructose 1,6-bisphosphate (FBP). Its function is as follows. Key enzyme in the regulation of glycerol uptake and metabolism. Catalyzes the phosphorylation of glycerol to yield sn-glycerol 3-phosphate. In Pseudomonas fluorescens (strain SBW25), this protein is Glycerol kinase.